Reading from the N-terminus, the 256-residue chain is NAD-dependent protein deacylase 2 (256 aa).

Positions 1-256 (MDSHSPIATV…MPQVVSHIYR (256 aa)) constitute a Deacetylase sirtuin-type domain. Residues 25–44 (GAGLSADSGMPTYRGLGGLY) and 108–111 (QNID) contribute to the NAD(+) site. His-128 functions as the Proton acceptor in the catalytic mechanism. Zn(2+)-binding residues include Cys-136, Cys-139, Cys-158, and Cys-161. Residues 199 to 201 (GTT), 225 to 227 (NPG), and Ala-243 contribute to the NAD(+) site.

Belongs to the sirtuin family. Class III subfamily. Requires Zn(2+) as cofactor.

The protein localises to the cytoplasm. It catalyses the reaction N(6)-acetyl-L-lysyl-[protein] + NAD(+) + H2O = 2''-O-acetyl-ADP-D-ribose + nicotinamide + L-lysyl-[protein]. NAD-dependent protein deacetylase which modulates the activities of several proteins which are inactive in their acetylated form. The chain is NAD-dependent protein deacylase 2 (cobB2) from Pseudomonas aeruginosa (strain ATCC 15692 / DSM 22644 / CIP 104116 / JCM 14847 / LMG 12228 / 1C / PRS 101 / PAO1).